The sequence spans 307 residues: MASLFGDDGVDDLFNDNIPTDPDQLPSDGEGEKLFADDEDNGVEPGSQDAQIVEPKKRAVRNPRPRLTVETLRGPRGIQTIEDYFKDIKFKGKGYEKTDLDEVLRRLQHWGHRMYPTYTFDDVLNNIERLGKKKPLQVHMARYRLGQLEQMRAHEAEALEEAQDEQQEGAGDEPFDEFDALLGEQIAMSRLAPPSPQQWKMSTASSNSTLATPSFSRGNAVMSTPYSGVNATFDRSGASVAPAFDRNGAPLASMDISDYGQPLPPSQPPTPAAKKLSNEQMARIAENRRLAQERLKAKQQQESGSKS.

Disordered stretches follow at residues 1-50 (MASL…SQDA) and 252-279 (ASMD…LSNE). The span at 262–271 (PLPPSQPPTP) shows a compositional bias: pro residues.

This sequence belongs to the CSM3 family.

It localises to the cytoplasm. Its subcellular location is the nucleus. Required for normal progression of S-phase. Important for cell survival after DNA damage or replication stress. In Drosophila melanogaster (Fruit fly), this protein is Protein TIPIN homolog.